The chain runs to 118 residues: Small ribosomal subunit protein uS13 (118 aa).

Residues 92-118 (RKGLPVRGQRTKTNARTRKGPRKPIRK) are disordered.

The protein belongs to the universal ribosomal protein uS13 family. In terms of assembly, part of the 30S ribosomal subunit. Forms a loose heterodimer with protein S19. Forms two bridges to the 50S subunit in the 70S ribosome.

Located at the top of the head of the 30S subunit, it contacts several helices of the 16S rRNA. In the 70S ribosome it contacts the 23S rRNA (bridge B1a) and protein L5 of the 50S subunit (bridge B1b), connecting the 2 subunits; these bridges are implicated in subunit movement. Contacts the tRNAs in the A and P-sites. In Pseudomonas putida (strain ATCC 700007 / DSM 6899 / JCM 31910 / BCRC 17059 / LMG 24140 / F1), this protein is Small ribosomal subunit protein uS13.